A 98-amino-acid polypeptide reads, in one-letter code: TACTTTQQTAAYKTLVSILSESSFNQCSKDSGYSMLTATALPTNAQYKLMCASTACKSMINKIVVLNPPDCDLTVPTSGLVLDVYTYANGFSTKCASL.

Disulfide bonds link Cys-3–Cys-71, Cys-27–Cys-56, and Cys-51–Cys-95.

The protein belongs to the elicitin family.

The protein localises to the secreted. Functionally, induces local and distal defense responses (incompatible hypersensitive reaction) in plants from the solanaceae and cruciferae families. Elicits leaf necrosis and causes the accumulation of pathogenesis-related proteins. Might interact with the lipidic molecules of the plasma membrane. In Phytophthora megasperma (Potato pink rot fungus), this protein is Beta-elicitin MGM-beta.